Here is a 142-residue protein sequence, read N- to C-terminus: Conidial pigment biosynthesis dehydratase EthD (142 aa).

An EthD domain is found at 25–121; the sequence is PGMSEAAYRE…PDHQKFADTS (97 aa).

Belongs to the tpcK family.

It functions in the pathway pigment biosynthesis. Dehydratase; part of the Pks1 gene cluster that mediates the biosynthesis of an anthraquinone derivative pigment that contributes to conidial pigmentation that provides protection from UV radiation, heat and cold stress. The polyketide synthase Pks1 produces 1-acetyl-2,4,6,8-tetrahydroxy-9,10-anthraquinone though condensation of acetyl-CoA with malonyl-CoA. The dehydratase EthD and the laccase Mlac1 further convert the anthraquinone derivative into the final conidial pigment. The polypeptide is Conidial pigment biosynthesis dehydratase EthD (Metarhizium robertsii (strain ARSEF 23 / ATCC MYA-3075) (Metarhizium anisopliae (strain ARSEF 23))).